The chain runs to 83 residues: Cell division topological specificity factor (83 aa).

This sequence belongs to the MinE family.

Prevents the cell division inhibition by proteins MinC and MinD at internal division sites while permitting inhibition at polar sites. This ensures cell division at the proper site by restricting the formation of a division septum at the midpoint of the long axis of the cell. This chain is Cell division topological specificity factor, found in Pseudoalteromonas atlantica (strain T6c / ATCC BAA-1087).